The following is a 163-amino-acid chain: Nucleotide-binding protein BcerKBAB4_1061 (163 aa).

This sequence belongs to the YajQ family.

Functionally, nucleotide-binding protein. The chain is Nucleotide-binding protein BcerKBAB4_1061 from Bacillus mycoides (strain KBAB4) (Bacillus weihenstephanensis).